The chain runs to 186 residues: Holliday junction branch migration complex subunit RuvA (186 aa).

A domain I region spans residues 1-63 (MNDYINGLLH…DNVFKYYGFK (63 aa)). The interval 64–137 (NQLIRDLFEL…QKELFNNKIS (74 aa)) is domain II. Residue Ser137 is a region of interest, flexible linker. A domain III region spans residues 137–186 (SDKKNKVITSLEKLGYKTKDIYKIIINIDEDMNIEDLTKYVLEQLSYLHN).

This sequence belongs to the RuvA family. In terms of assembly, homotetramer. Forms an RuvA(8)-RuvB(12)-Holliday junction (HJ) complex. HJ DNA is sandwiched between 2 RuvA tetramers; dsDNA enters through RuvA and exits via RuvB. An RuvB hexamer assembles on each DNA strand where it exits the tetramer. Each RuvB hexamer is contacted by two RuvA subunits (via domain III) on 2 adjacent RuvB subunits; this complex drives branch migration. In the full resolvosome a probable DNA-RuvA(4)-RuvB(12)-RuvC(2) complex forms which resolves the HJ.

The protein localises to the cytoplasm. Functionally, the RuvA-RuvB-RuvC complex processes Holliday junction (HJ) DNA during genetic recombination and DNA repair, while the RuvA-RuvB complex plays an important role in the rescue of blocked DNA replication forks via replication fork reversal (RFR). RuvA specifically binds to HJ cruciform DNA, conferring on it an open structure. The RuvB hexamer acts as an ATP-dependent pump, pulling dsDNA into and through the RuvAB complex. HJ branch migration allows RuvC to scan DNA until it finds its consensus sequence, where it cleaves and resolves the cruciform DNA. This is Holliday junction branch migration complex subunit RuvA from Mycoplasma mycoides subsp. mycoides SC (strain CCUG 32753 / NCTC 10114 / PG1).